The following is a 53-amino-acid chain: Sec-independent protein translocase protein TatA (53 aa).

The helical transmembrane segment at 1–21 threads the bilayer; that stretch reads MGMSFSHLLIVLLIIFVLFGA.

Belongs to the TatA/E family. The Tat system comprises two distinct complexes: a TatABC complex, containing multiple copies of TatA, TatB and TatC subunits, and a separate TatA complex, containing only TatA subunits. Substrates initially bind to the TatABC complex, which probably triggers association of the separate TatA complex to form the active translocon.

It is found in the cell inner membrane. Its function is as follows. Part of the twin-arginine translocation (Tat) system that transports large folded proteins containing a characteristic twin-arginine motif in their signal peptide across membranes. TatA could form the protein-conducting channel of the Tat system. The sequence is that of Sec-independent protein translocase protein TatA from Rickettsia typhi (strain ATCC VR-144 / Wilmington).